A 207-amino-acid polypeptide reads, in one-letter code: Holliday junction branch migration complex subunit RuvA (207 aa).

The tract at residues Met1–Asn64 is domain I. Residues Thr65–Pro143 form a domain II region. Residues Ala144–Thr158 form a flexible linker region. Residues Ser159–Ile207 are domain III.

Belongs to the RuvA family. As to quaternary structure, homotetramer. Forms an RuvA(8)-RuvB(12)-Holliday junction (HJ) complex. HJ DNA is sandwiched between 2 RuvA tetramers; dsDNA enters through RuvA and exits via RuvB. An RuvB hexamer assembles on each DNA strand where it exits the tetramer. Each RuvB hexamer is contacted by two RuvA subunits (via domain III) on 2 adjacent RuvB subunits; this complex drives branch migration. In the full resolvosome a probable DNA-RuvA(4)-RuvB(12)-RuvC(2) complex forms which resolves the HJ.

It is found in the cytoplasm. In terms of biological role, the RuvA-RuvB-RuvC complex processes Holliday junction (HJ) DNA during genetic recombination and DNA repair, while the RuvA-RuvB complex plays an important role in the rescue of blocked DNA replication forks via replication fork reversal (RFR). RuvA specifically binds to HJ cruciform DNA, conferring on it an open structure. The RuvB hexamer acts as an ATP-dependent pump, pulling dsDNA into and through the RuvAB complex. HJ branch migration allows RuvC to scan DNA until it finds its consensus sequence, where it cleaves and resolves the cruciform DNA. In Aliivibrio fischeri (strain MJ11) (Vibrio fischeri), this protein is Holliday junction branch migration complex subunit RuvA.